The primary structure comprises 1103 residues: Isoleucine--tRNA ligase (1103 aa).

The disordered stretch occupies residues Met1–Pro25. Positions Pro65–His75 match the 'HIGH' region motif. The short motif at Lys649–His653 is the 'KMSKS' region element. Lys652 provides a ligand contact to ATP.

The protein belongs to the class-I aminoacyl-tRNA synthetase family. IleS type 2 subfamily. As to quaternary structure, monomer. Zn(2+) serves as cofactor.

It localises to the cytoplasm. It catalyses the reaction tRNA(Ile) + L-isoleucine + ATP = L-isoleucyl-tRNA(Ile) + AMP + diphosphate. Catalyzes the attachment of isoleucine to tRNA(Ile). As IleRS can inadvertently accommodate and process structurally similar amino acids such as valine, to avoid such errors it has two additional distinct tRNA(Ile)-dependent editing activities. One activity is designated as 'pretransfer' editing and involves the hydrolysis of activated Val-AMP. The other activity is designated 'posttransfer' editing and involves deacylation of mischarged Val-tRNA(Ile). The sequence is that of Isoleucine--tRNA ligase from Bifidobacterium longum (strain NCC 2705).